The primary structure comprises 1185 residues: Calmodulin-binding transcription activator homolog 1 (1185 aa).

Positions 72–200 (AVELFPCFKD…YLNVKTNNKI (129 aa)) form a DNA-binding region, CG-1. 2 disordered regions span residues 252–277 (GVNLPTSPLPQEPSSSTSRELERRNS) and 390–411 (KIRSGSQESPMGPPSSSSVTST). Over residues 393–411 (SGSQESPMGPPSSSSVTST) the composition is skewed to low complexity. Residues 418 to 498 (EMTPSSSSLK…ISTASEFTYE (81 aa)) enclose the IPT/TIG domain. The stretch at 616 to 646 (DGSTPLHTACKNSASRIARLIISIDSSAIDV) is one ANK repeat. One can recognise an IQ domain in the interval 957–984 (EAAMVIQRAYRVYRARSTTRRQEDIERR). Residues 1121–1185 (CPQTSGDQRN…KPPYGCGTLA (65 aa)) form a disordered region. Over residues 1128–1147 (QRNKRDSDGERKRDAHHDAP) the composition is skewed to basic and acidic residues.

Belongs to the CAMTA family. In terms of assembly, may interact with calmodulin. As to expression, expressed broadly in the nervous system.

It localises to the nucleus. Its function is as follows. Transcription factor. Positively modulates neuronal levels of the ubiquitous Ca2+ sensor calmodulin/cmd-1, probably by direct binding to the cmd-1 promoter, thereby regulating Ca2+ signaling, physiology, and behavior. This chain is Calmodulin-binding transcription activator homolog 1, found in Caenorhabditis elegans.